Consider the following 161-residue polypeptide: Protein-export protein SecB (161 aa).

Belongs to the SecB family. In terms of assembly, homotetramer, a dimer of dimers. One homotetramer interacts with 1 SecA dimer.

Its subcellular location is the cytoplasm. Its function is as follows. One of the proteins required for the normal export of preproteins out of the cell cytoplasm. It is a molecular chaperone that binds to a subset of precursor proteins, maintaining them in a translocation-competent state. It also specifically binds to its receptor SecA. This is Protein-export protein SecB from Ectopseudomonas mendocina (strain ymp) (Pseudomonas mendocina).